The following is a 1703-amino-acid chain: MNKFVSIALCSSLLGGMAFAQQTELGRNPNVRLLESTQQSVTKVQFRMDNLKFTEVQTPKGMAQVPTYTEGVNLSEKGMPTLPILSRSLAVSDTREMKVEVVSSKFIEKKNVLIAPSKGMIMRNEDPKKIPYVYGKSYSQNKFFPGEIATLDDPFILRDVRGQVVNFAPLQYNPVTKTLRIYTEITVAVSETSEQGKNILNKKGTFAGFEDTYKRMFMNYEPGRYTPVEEKQNGRMIVIVAKKYEGDIKDFVDWKNQRGLRTEVKVAEDIASPVTANAIQQFVKQEYEKEGNDLTYVLLVGDHKDIPAKITPGIKSDQVYGQIVGNDHYNEVFIGRFSCESKEDLKTQIDRTIHYERNITTEDKWLGQALCIASAEGGPSADNGESDIQHENVIANLLTQYGYTKIIKCYDPGVTPKNIIDAFNGGISLVNYTGHGSETAWGTSHFGTTHVKQLTNSNQLPFIFDVACVNGDFLFSMPCFAEALMRAQKDGKPTGTVAIIASTINQSWASPMRGQDEMNEILCEKHPNNIKRTFGGVTMNGMFAMVEKYKKDGEKMLDTWTVFGDPSLLVRTLVPTKMQVTAPAQINLTDASVNVSCDYNGAIATISANGKMFGSAVVENGTATINLTGLTNESTLTLTVVGYNKETVIKTINTNGEPNPYQPVSNLTATTQGQKVTLKWDAPSTKTNATTNTARSVDGIRELVLLSVSDAPELLRSGQAEIVLEAHDVWNDGSGYQILLDADHDQYGQVIPSDTHTLWPNCSVPANLFAPFEYTVPENADPSCSPTNMIMDGTASVNIPAGTYDFAIAAPQANAKIWIAGQGPTKEDDYVFEAGKKYHFLMKKMGSGDGTELTISEGGGSDYTYTVYRDGTKIKEGLTATTFEEDGVATGNHEYCVEVKYTAGVSPKVCKDVTVEGSNEFAPVQNLTGSAVGQKVTLKWDAPNGTPNPNPNPNPNPNPGTTTLSESFENGIPASWKTIDADGDGHGWKPGNAPGIAGYNSNGCVYSESFGLGGIGVLTPDNYLITPALDLPNGGKLTFWVCAQDANYASEHYAVYASSTGNDASNFTNALLEETITAKGVRSPEAIRGRIQGTWRQKTVDLPAGTKYVAFRHFQSTDMFYIDLDEVEIKANGKRADFTETFESSTHGEAPAEWTTIDADGDGQGWLCLSSGQLDWLTAHGGTNVVASFSWNGMALNPDNYLISKDVTGATKVKYYYAVNDGFPGDHYAVMISKTGTNAGDFTVVFEETPNGINKGGARFGLSTEANGAKPQSVWIERTVDLPAGTKYVAFRHYNCSDLNYILLDDIQFTMGGSPTPTDYTYTVYRDGTKIKEGLTETTFEEDGVATGNHEYCVEVKYTAGVSPKECVNVTINPTQFNPVKNLKAQPDGGDVVLKWEAPSAKKTEGSREVKRIGDGLFVTIEPANDVRANEAKVVLAADNVWGDNTGYQFLLDADHNTFGSVIPATGPLFTGTASSNLYSANFEYLIPANADPVVTTQNIIVTGQGEVVIPGGVYDYCITNPEPASGKMWIAGDGGNQPARYDDFTFEAGKKYTFTMRRAGMGDGTDMEVEDDSPASYTYTVYRDGTKIKEGLTETTYRDAGMSAQSHEYCVEVKYAAGVSPKVCVDYIPDGVADVTAQKPYTLTVVGKTITVTCQGEAMIYDMNGRRLAAGRNTVVYTAQGGYYAVMVVVDGKSYVEKLAVK.

The first 20 residues, 1 to 20 (MNKFVSIALCSSLLGGMAFA), serve as a signal peptide directing secretion. A propeptide spanning residues 21–224 (QQTELGRNPN…RMFMNYEPGR (204 aa)) is cleaved from the precursor. 7 residues coordinate Ca(2+): D302, V324, D327, Y329, E331, E385, and H390. H435 serves as the catalytic Proton donor. C468 functions as the Nucleophile in the catalytic mechanism. Residues F473, E482, D516, E517, E520, and H526 each contribute to the Ca(2+) site. The disordered stretch occupies residues 940–968 (WDAPNGTPNPNPNPNPNPNPGTTTLSESF). Residues 946–958 (TPNPNPNPNPNPN) show a composition bias toward pro residues.

The protein belongs to the peptidase C25 family.

It localises to the secreted. The enzyme catalyses Hydrolysis of proteins and small molecule substrates, with a preference for Arg in P1.. Its function is as follows. Thiol protease. Acts synergistically with RgpB to catalyze the maturation of fimbrial subunits, such as FimA. Its proteolytic activity is a major factor in both periodontal tissue destruction and in evasion of host defense mechanisms. The sequence is that of Gingipain R1 from Porphyromonas gingivalis (strain ATCC 33277 / DSM 20709 / CIP 103683 / JCM 12257 / NCTC 11834 / 2561).